Consider the following 198-residue polypeptide: MYDYIKGQLTKITAKYIVVEANGLGYMITVANPYSFTDCVNQQVTIYLHQVIREDAQLLFGFHSEEEKDVFLKLISVSGIGPTTALAIVAVDDNRGLVNAIDNSDITYLMRFPKIGKKTAQQMVLDLAGKFVEAPKEESSKPPKAKQQGNEQLDEAVEALLALGYKATELKKIRAFFEGTSETAEQYIKSALKMLMKG.

The interval 1 to 63 (MYDYIKGQLT…EDAQLLFGFH (63 aa)) is domain I. Positions 64–142 (SEEEKDVFLK…EAPKEESSKP (79 aa)) are domain II. Positions 143–147 (PKAKQ) are flexible linker. The interval 148-198 (QGNEQLDEAVEALLALGYKATELKKIRAFFEGTSETAEQYIKSALKMLMKG) is domain III.

Belongs to the RuvA family. In terms of assembly, homotetramer. Forms an RuvA(8)-RuvB(12)-Holliday junction (HJ) complex. HJ DNA is sandwiched between 2 RuvA tetramers; dsDNA enters through RuvA and exits via RuvB. An RuvB hexamer assembles on each DNA strand where it exits the tetramer. Each RuvB hexamer is contacted by two RuvA subunits (via domain III) on 2 adjacent RuvB subunits; this complex drives branch migration. In the full resolvosome a probable DNA-RuvA(4)-RuvB(12)-RuvC(2) complex forms which resolves the HJ.

The protein resides in the cytoplasm. Functionally, the RuvA-RuvB-RuvC complex processes Holliday junction (HJ) DNA during genetic recombination and DNA repair, while the RuvA-RuvB complex plays an important role in the rescue of blocked DNA replication forks via replication fork reversal (RFR). RuvA specifically binds to HJ cruciform DNA, conferring on it an open structure. The RuvB hexamer acts as an ATP-dependent pump, pulling dsDNA into and through the RuvAB complex. HJ branch migration allows RuvC to scan DNA until it finds its consensus sequence, where it cleaves and resolves the cruciform DNA. The polypeptide is Holliday junction branch migration complex subunit RuvA (Streptococcus equi subsp. equi (strain 4047)).